The sequence spans 426 residues: Zinc finger CCCH domain-containing protein 15 (426 aa).

Over residues 1–12 (MPPKKQAQAGGS) the composition is skewed to low complexity. 2 disordered regions span residues 1–30 (MPPK…KTFG) and 53–74 (GQQN…KDDK). Basic and acidic residues predominate over residues 13–29 (KKAEQKKKEKIIEDKTF). Polar residues predominate over residues 53 to 62 (GQQNPRQVAQ). Residues 61-86 (AQSEAEKKLKKDDKKKELQELNELFK) are a coiled coil. Basic and acidic residues predominate over residues 64–74 (EAEKKLKKDDK). C3H1-type zinc fingers lie at residues 99 to 126 (DPKS…HDLT) and 174 to 212 (PKTQ…HALP). A coiled-coil region spans residues 218–285 (KKDKKKEEKE…RRKADFKAGK (68 aa)). Ser-231 carries the post-translational modification Phosphoserine. Positions 236–260 (IERERSALGPNVTKITLESFLAWKK) are required for interaction with DRG1. The segment at 299-326 (PELVNDDDEEADDTRYTQGTGGDEVDDS) is disordered. 3 positions are modified to phosphoserine: Ser-351, Ser-360, and Ser-381. The segment at 358 to 411 (YTSDKDENKLSEASGGRAENGERSDLEEDNEREGTENGAIDAVPVDENLFTGED) is disordered.

This sequence belongs to the ZC3H15/TMA46 family. As to quaternary structure, interacts with DRG1; this interaction prevents DRG1 poly-ubiquitination and degradation by proteasome. DRG1-ZC3H15/DFRP1 complex co-sediments with polysomes. Associates with microtubules.

It is found in the cytoplasm. The protein localises to the nucleus. In terms of biological role, protects DRG1 from proteolytic degradation. Stimulates DRG1 GTPase activity likely by increasing the affinity for the potassium ions. The sequence is that of Zinc finger CCCH domain-containing protein 15 (ZC3H15) from Homo sapiens (Human).